We begin with the raw amino-acid sequence, 212 residues long: Entry-fusion complex associated protein OPG083 (212 aa).

The Virion surface segment spans residues Met-1–Asp-175. 3 disulfide bridges follow: Cys-33–Cys-55, Cys-47–Cys-127, and Cys-107–Cys-149. The chain crosses the membrane as a helical span at residues Pro-176 to Ile-196. At Arg-197–Val-212 the chain is on the intravirion side.

Belongs to the orthopoxvirus OPG053 family. Component of the entry fusion complex (EFC) composed of OPG053/F9, OPG076/O3, OPG086/G3, OPG094/G9, OPG095/L1, OPG099/L5, OPG107/H2, OPG143/A16, OPG104/J5, OPG147/A21 and OPG155/A28. Except for OPG095/L1 and OPG052/F9, each of the EFC proteins is required for assembly or stability of the complex. In terms of processing, disulfid bonds are oxidized in the cytoplasm by OPG088 protein. Post-translationally, unglycosylated because produced in viral factories instead of the classic ER -Golgi route.

It localises to the virion membrane. Functionally, component of the entry fusion complex (EFC), which consists of 11 proteins. During cell infection, this complex mediates entry of the virion core into the host cytoplasm by a two-step mechanism consisting of lipid mixing of the viral and cellular membranes and subsequent pore formation. This Vaccinia virus (strain Western Reserve) (VACV) protein is Entry-fusion complex associated protein OPG083 (OPG053).